A 32-amino-acid chain; its full sequence is Photosystem II reaction center protein T (32 aa).

Residues 3 to 23 (AFAYVLILTLAVVTLFFAVAF) traverse the membrane as a helical segment.

This sequence belongs to the PsbT family. As to quaternary structure, PSII is composed of 1 copy each of membrane proteins PsbA, PsbB, PsbC, PsbD, PsbE, PsbF, PsbH, PsbI, PsbJ, PsbK, PsbL, PsbM, PsbT, PsbX, PsbY, Psb30/Ycf12, peripheral proteins PsbO, CyanoQ (PsbQ), PsbU, PsbV and a large number of cofactors. It forms dimeric complexes.

Its subcellular location is the cellular thylakoid membrane. In terms of biological role, found at the monomer-monomer interface of the photosystem II (PS II) dimer, plays a role in assembly and dimerization of PSII. PSII is a light-driven water plastoquinone oxidoreductase, using light energy to abstract electrons from H(2)O, generating a proton gradient subsequently used for ATP formation. The polypeptide is Photosystem II reaction center protein T (Prochlorococcus marinus (strain MIT 9301)).